The chain runs to 313 residues: Dehydrogenase/reductase SDR family member 1 (313 aa).

Isoleucine 19 contributes to the NAD(+) binding site. Arginine 21 is modified (omega-N-methylarginine). Aspartate 64 is an NAD(+) binding site. A substrate-binding site is contributed by serine 151. Residues tyrosine 163, lysine 167, and threonine 198 each coordinate NAD(+). Tyrosine 163 serves as the catalytic Proton acceptor.

This sequence belongs to the short-chain dehydrogenases/reductases (SDR) family.

The protein resides in the endoplasmic reticulum. It carries out the reaction 17alpha-estradiol + NADP(+) = estrone + NADPH + H(+). The catalysed reaction is testosterone + NADP(+) = androst-4-ene-3,17-dione + NADPH + H(+). The enzyme catalyses prostaglandin E1 + NADPH + H(+) = prostaglandin F1 + NADP(+). It catalyses the reaction isatin + NADPH + H(+) = 3-hydroxyindolin-2-one + NADP(+). Functionally, NADPH-dependent oxidoreductase which catalyzes the reduction of some steroids (estrone, androstene-3,17-dione and cortisone) as well as prostaglandin E1, isatin and xenobiotics in vitro. May have a role in steroid and/or xenobiotic metabolism. The chain is Dehydrogenase/reductase SDR family member 1 from Mus musculus (Mouse).